The following is a 359-amino-acid chain: Phosphoserine aminotransferase (359 aa).

L-glutamate is bound by residues Ser-9 and Arg-42. Pyridoxal 5'-phosphate contacts are provided by residues 76–77 (AS), Trp-102, Thr-152, Asp-171, and Gln-194. Lys-195 carries the N6-(pyridoxal phosphate)lysine modification. 236–237 (NT) provides a ligand contact to pyridoxal 5'-phosphate.

Belongs to the class-V pyridoxal-phosphate-dependent aminotransferase family. SerC subfamily. Homodimer. It depends on pyridoxal 5'-phosphate as a cofactor.

It is found in the cytoplasm. It carries out the reaction O-phospho-L-serine + 2-oxoglutarate = 3-phosphooxypyruvate + L-glutamate. The enzyme catalyses 4-(phosphooxy)-L-threonine + 2-oxoglutarate = (R)-3-hydroxy-2-oxo-4-phosphooxybutanoate + L-glutamate. It functions in the pathway amino-acid biosynthesis; L-serine biosynthesis; L-serine from 3-phospho-D-glycerate: step 2/3. Its pathway is cofactor biosynthesis; pyridoxine 5'-phosphate biosynthesis; pyridoxine 5'-phosphate from D-erythrose 4-phosphate: step 3/5. In terms of biological role, catalyzes the reversible conversion of 3-phosphohydroxypyruvate to phosphoserine and of 3-hydroxy-2-oxo-4-phosphonooxybutanoate to phosphohydroxythreonine. This chain is Phosphoserine aminotransferase, found in Marinomonas sp. (strain MWYL1).